Reading from the N-terminus, the 695-residue chain is NAD(P)H-quinone oxidoreductase subunit 5, chloroplastic (695 aa).

15 consecutive transmembrane segments (helical) span residues 1 to 21 (WIIP…LILF), 32 to 52 (WAFQ…YLSI), 81 to 101 (IDPL…MVLI), 117 to 137 (FAYM…SNLI), 139 to 159 (IYIF…FWFT), 177 to 197 (GDFG…SFEF), 211 to 231 (NEVN…GAVA), 250 to 270 (TPIS…FLVA), 278 to 298 (VIPY…LLGA), 319 to 339 (LGYM…FHLI), 346 to 366 (ALLF…VGYS), 388 to 408 (ITFL…CFWS), 417 to 437 (WLYS…TAFY), 535 to 555 (LFPI…GIPF), and 594 to 614 (VLSV…YKPI).

It belongs to the complex I subunit 5 family. As to quaternary structure, NDH is composed of at least 16 different subunits, 5 of which are encoded in the nucleus.

Its subcellular location is the plastid. It localises to the chloroplast thylakoid membrane. The enzyme catalyses a plastoquinone + NADH + (n+1) H(+)(in) = a plastoquinol + NAD(+) + n H(+)(out). It carries out the reaction a plastoquinone + NADPH + (n+1) H(+)(in) = a plastoquinol + NADP(+) + n H(+)(out). In terms of biological role, NDH shuttles electrons from NAD(P)H:plastoquinone, via FMN and iron-sulfur (Fe-S) centers, to quinones in the photosynthetic chain and possibly in a chloroplast respiratory chain. The immediate electron acceptor for the enzyme in this species is believed to be plastoquinone. Couples the redox reaction to proton translocation, and thus conserves the redox energy in a proton gradient. This Capsicum baccatum (Peruvian pepper) protein is NAD(P)H-quinone oxidoreductase subunit 5, chloroplastic (ndhF).